The primary structure comprises 634 residues: Chaperone protein HtpG (634 aa).

The tract at residues 1–342 is a; substrate-binding; sequence MTVDTDKQTL…SSDLSLNVSR (342 aa). Residues 343–559 are b; that stretch reads EILQSGPVVD…QGDLGLQMRQ (217 aa). The interval 560 to 634 is c; sequence LLEASGQAVP…LNKLLLELSV (75 aa).

This sequence belongs to the heat shock protein 90 family. As to quaternary structure, homodimer.

Its subcellular location is the cytoplasm. Functionally, molecular chaperone. Has ATPase activity. The chain is Chaperone protein HtpG from Xanthomonas oryzae pv. oryzae (strain MAFF 311018).